A 365-amino-acid chain; its full sequence is Quinolone epoxide rearrangement protein asqO (365 aa).

This sequence belongs to the quinolone epoxide rearrangement protein penF family.

The catalysed reaction is (1'E,3'E)-5-(3,3-dimethyloxiran-2-yl)-3-methylhexa-1,3-dienyl-quinolinone B = aspoquinolone A. It catalyses the reaction (1'E,3'E)-5-(3,3-dimethyloxiran-2-yl)-3-methylhexa-1,3-dienyl-quinolinone B = aspoquinolone B. It functions in the pathway secondary metabolite biosynthesis. It participates in alkaloid biosynthesis. The protein operates within mycotoxin biosynthesis. Its function is as follows. Quinolone epoxide rearrangement protein; part of the gene cluster that mediates the biosynthesis of the aspoquinolone mycotoxins. Within the pathway, asqO catalyzes an enzymatic 3-exo-tet cyclization to yield the cyclopropyl-THF ring system in aspoquinolone. The first step of the pathway is catalyzed by the nonribosomal peptide synthetase asqK that condenses anthranilic acid and O-methyl-L-tyrosine to produce 4'-methoxycyclopeptin. 4'-methoxycyclopeptin is then converted to 4'-methoxydehydrocyclopeptin by the ketoglutarate-dependent dioxygenase asqJ. AsqJ also converts its first product 4'-methoxydehydrocyclopeptin to 4'-methoxycyclopenin. The following conversion of 4'-methoxycyclopenin into 4'-methoxyviridicatin is catalyzed by the cyclopenase asqI. 4'-methoxyviridicatin is the precursor of quinolone natural products, and is further converted to quinolinone B. The prenyltransferase asqH1 then catalyzes the canonical Friedel-Crafts alkylation of quinolinone B with dimethylallyl cation to yield dimethylallyl quinolone, which is subjected to FAD-dependent dehydrogenation by the FAD-linked oxidoreductase asqF to yield conjugated aryl diene. The delta(3') double bond then serves as the site of the second alkylation with DMAPP catalyzed by the prenyltransferase asqH2 to yield a carbenium ion intermediate, which can be attacked by H(2)O to yield a styrenyl quinolone containing a C3'-hydroxyprenyl chain. The FAD-dependent monooxygenase asqG performs epoxidation of the terminal C7'-C8' olefin. Finally, after dehydratation of the epoxide at C3 by asqC, the quinolone epoxide rearrangement protein asqO catalyzes an enzymatic 3-exo-tet cyclization to yield the cyclopropyl-THF ring system in aspoquinolone. In Emericella nidulans (strain FGSC A4 / ATCC 38163 / CBS 112.46 / NRRL 194 / M139) (Aspergillus nidulans), this protein is Quinolone epoxide rearrangement protein asqO.